The following is a 247-amino-acid chain: Triosephosphate isomerase (247 aa).

Asn10 and Lys12 together coordinate substrate. Residue His94 is the Electrophile of the active site. Glu164 serves as the catalytic Proton acceptor.

It belongs to the triosephosphate isomerase family. In terms of assembly, homodimer.

The catalysed reaction is D-glyceraldehyde 3-phosphate = dihydroxyacetone phosphate. Its pathway is carbohydrate biosynthesis; gluconeogenesis. It functions in the pathway carbohydrate degradation; glycolysis; D-glyceraldehyde 3-phosphate from glycerone phosphate: step 1/1. The sequence is that of Triosephosphate isomerase (Tpi) from Drosophila melanogaster (Fruit fly).